Here is a 293-residue protein sequence, read N- to C-terminus: Nucleotide-binding protein BA_5384/GBAA_5384/BAS5004 (293 aa).

14–21 (GMSGAGKT) contributes to the ATP binding site. A GTP-binding site is contributed by 65–68 (DLRG).

This sequence belongs to the RapZ-like family.

Functionally, displays ATPase and GTPase activities. The polypeptide is Nucleotide-binding protein BA_5384/GBAA_5384/BAS5004 (Bacillus anthracis).